Here is a 349-residue protein sequence, read N- to C-terminus: S-adenosylmethionine:tRNA ribosyltransferase-isomerase (349 aa).

The protein belongs to the QueA family. Monomer.

It is found in the cytoplasm. The enzyme catalyses 7-aminomethyl-7-carbaguanosine(34) in tRNA + S-adenosyl-L-methionine = epoxyqueuosine(34) in tRNA + adenine + L-methionine + 2 H(+). It functions in the pathway tRNA modification; tRNA-queuosine biosynthesis. In terms of biological role, transfers and isomerizes the ribose moiety from AdoMet to the 7-aminomethyl group of 7-deazaguanine (preQ1-tRNA) to give epoxyqueuosine (oQ-tRNA). This chain is S-adenosylmethionine:tRNA ribosyltransferase-isomerase, found in Azotobacter vinelandii (strain DJ / ATCC BAA-1303).